A 267-amino-acid chain; its full sequence is Tryptophan synthase alpha chain (267 aa).

Catalysis depends on proton acceptor residues E49 and D60.

Belongs to the TrpA family. As to quaternary structure, tetramer of two alpha and two beta chains.

The catalysed reaction is (1S,2R)-1-C-(indol-3-yl)glycerol 3-phosphate + L-serine = D-glyceraldehyde 3-phosphate + L-tryptophan + H2O. It functions in the pathway amino-acid biosynthesis; L-tryptophan biosynthesis; L-tryptophan from chorismate: step 5/5. Functionally, the alpha subunit is responsible for the aldol cleavage of indoleglycerol phosphate to indole and glyceraldehyde 3-phosphate. In Acinetobacter baumannii (strain AB307-0294), this protein is Tryptophan synthase alpha chain.